Here is a 386-residue protein sequence, read N- to C-terminus: Tumor necrosis factor receptor superfamily member 10D (386 aa).

2 disordered regions span residues 1–25 and 62–90; these read MGLWGQSVPTASSARAGRYPGARTA and DEVPQQTVAPQQQRRSLKEEECPAGSHRS. The first 55 residues, 1-55, serve as a signal peptide directing secretion; it reads MGLWGQSVPTASSARAGRYPGARTASGTRPWLLDPKILKFVVFIVAVLLPVRVDS. At 56 to 211 the chain is on the extracellular side; that stretch reads ATIPRQDEVP…ILGMLASPYH (156 aa). 3 TNFR-Cys repeats span residues 58–97, 98–139, and 140–180; these read IPRQDEVPQQTVAPQQQRRSLKEEECPAGSHRSEYTGACN, PCTE…DTVC, and QCEK…DIKC. Over residues 64–75 the composition is skewed to polar residues; that stretch reads VPQQTVAPQQQR. Cystine bridges form between Cys-83-Cys-96, Cys-99-Cys-115, Cys-118-Cys-131, Cys-121-Cys-139, Cys-141-Cys-155, Cys-158-Cys-172, and Cys-162-Cys-180. Asn-127 is a glycosylation site (N-linked (GlcNAc...) asparagine). Asn-182 is a glycosylation site (N-linked (GlcNAc...) asparagine). The helical transmembrane segment at 212–232 threads the bilayer; the sequence is YLIIIVVLVIILAVVVVGFSC. The Cytoplasmic segment spans residues 233-386; the sequence is RKKFISYLKG…DEAGSATSCL (154 aa). Positions 340 to 366 constitute a Death; truncated domain; the sequence is SADISTLLDASATLEEGHAKETIQDQL.

As to expression, widely expressed, in particular in fetal kidney, lung and liver, and in adult testis and liver. Also expressed in peripheral blood leukocytes, colon and small intestine, ovary, prostate, thymus, spleen, pancreas, kidney, lung, placenta and heart.

It is found in the membrane. Receptor for the cytotoxic ligand TRAIL. Contains a truncated death domain and hence is not capable of inducing apoptosis but protects against TRAIL-mediated apoptosis. Reports are contradictory with regards to its ability to induce the NF-kappa-B pathway. According to PubMed:9382840, it cannot but according to PubMed:9430226, it can induce the NF-kappa-B pathway. This is Tumor necrosis factor receptor superfamily member 10D from Homo sapiens (Human).